Here is a 622-residue protein sequence, read N- to C-terminus: WD repeat-containing protein 70 (622 aa).

The span at 36–55 shows a compositional bias: basic and acidic residues; that stretch reads RTAVERSKQTLEAREKEEQL. The segment at 36–141 is disordered; that stretch reads RTAVERSKQT…DNPVKDIPDS (106 aa). Residues 67-84 show a composition bias toward low complexity; the sequence is SSSGQKKTKASGSSSGSE. The span at 120 to 132 shows a compositional bias: acidic residues; the sequence is SDDEDDEEHEDDD. WD repeat units follow at residues 148–187, 195–236, 249–289, 298–337, 344–383, 387–434, and 437–476; these read HGTK…ASLQ, CECH…ECVK, GHTA…KHKG, GKPV…HTKF, TPGT…NPLN, GLEN…KIYE, and VTEA…QRGA. The segment covering 508-533 has biased composition (basic and acidic residues); that stretch reads REPRQRSTRKQLEKDRLDPVKSHKPE. Disordered regions lie at residues 508-549 and 602-622; these read REPR…GTHG and AEVD…KRKI. Residues 539–549 are compositionally biased toward gly residues; it reads PGRGGRVGTHG. The segment covering 604–614 has biased composition (acidic residues); the sequence is VDSDEEEPDNE.

It belongs to the WD repeat GAD-1 family.

The sequence is that of WD repeat-containing protein 70 (wdr70) from Xenopus laevis (African clawed frog).